Reading from the N-terminus, the 955-residue chain is Protein translocase subunit SecA (955 aa).

ATP contacts are provided by residues Gln90, 108-112, and Asp509; that span reads GEGKT. The disordered stretch occupies residues 537 to 571; that stretch reads EGHRPPVPLQRSGAEGGGGFAAKAAPASGPHGHAP. Positions 557-571 are enriched in low complexity; that stretch reads AAKAAPASGPHGHAP.

The protein belongs to the SecA family. As to quaternary structure, monomer and homodimer. Part of the essential Sec protein translocation apparatus which comprises SecA, SecYEG and auxiliary proteins SecDF. Other proteins may also be involved.

The protein localises to the cell inner membrane. It localises to the cellular thylakoid membrane. It is found in the cytoplasm. It carries out the reaction ATP + H2O + cellular proteinSide 1 = ADP + phosphate + cellular proteinSide 2.. Part of the Sec protein translocase complex. Interacts with the SecYEG preprotein conducting channel. Has a central role in coupling the hydrolysis of ATP to the transfer of proteins into and across the cell membrane, serving as an ATP-driven molecular motor driving the stepwise translocation of polypeptide chains across the membrane. In terms of biological role, probably participates in protein translocation into and across both the cytoplasmic and thylakoid membranes in cyanobacterial cells. The chain is Protein translocase subunit SecA from Synechococcus sp. (strain WH7803).